Consider the following 349-residue polypeptide: tRNA pseudouridine synthase D (349 aa).

Phe-27 lines the substrate pocket. Asp-80 acts as the Nucleophile in catalysis. A substrate-binding site is contributed by Asn-129. The 149-residue stretch at Gly-155–Leu-303 folds into the TRUD domain. Phe-329 contacts substrate.

Belongs to the pseudouridine synthase TruD family.

It catalyses the reaction uridine(13) in tRNA = pseudouridine(13) in tRNA. Functionally, responsible for synthesis of pseudouridine from uracil-13 in transfer RNAs. This chain is tRNA pseudouridine synthase D, found in Citrobacter koseri (strain ATCC BAA-895 / CDC 4225-83 / SGSC4696).